The sequence spans 82 residues: Acyl carrier protein (82 aa).

In terms of domain architecture, Carrier spans 2-77 (DNVADRVKKV…QAIDYVSAHI (76 aa)). Residue Ser-37 is modified to O-(pantetheine 4'-phosphoryl)serine.

It belongs to the acyl carrier protein (ACP) family. In terms of processing, 4'-phosphopantetheine is transferred from CoA to a specific serine of apo-ACP by AcpS. This modification is essential for activity because fatty acids are bound in thioester linkage to the sulfhydryl of the prosthetic group.

Its subcellular location is the cytoplasm. The protein operates within lipid metabolism; fatty acid biosynthesis. In terms of biological role, carrier of the growing fatty acid chain in fatty acid biosynthesis. This chain is Acyl carrier protein, found in Acidithiobacillus ferrooxidans (strain ATCC 23270 / DSM 14882 / CIP 104768 / NCIMB 8455) (Ferrobacillus ferrooxidans (strain ATCC 23270)).